The sequence spans 122 residues: Large ribosomal subunit protein uL18 (122 aa).

This sequence belongs to the universal ribosomal protein uL18 family. As to quaternary structure, part of the 50S ribosomal subunit; part of the 5S rRNA/L5/L18/L25 subcomplex. Contacts the 5S and 23S rRNAs.

In terms of biological role, this is one of the proteins that bind and probably mediate the attachment of the 5S RNA into the large ribosomal subunit, where it forms part of the central protuberance. The chain is Large ribosomal subunit protein uL18 from Thermotoga petrophila (strain ATCC BAA-488 / DSM 13995 / JCM 10881 / RKU-1).